Reading from the N-terminus, the 235-residue chain is Attacin-E (235 aa).

The first 19 residues, 1 to 19, serve as a signal peptide directing secretion; sequence MFGKIVFLLLVALCAGVQS. A propeptide spanning residues 20–47 is cleaved from the precursor; it reads RYLIVSEPVYYIEHYEEPELLASSRVRR.

Belongs to the attacin/sarcotoxin-2 family. Post-translationally, attacin F appears to be derived by proteolytic digestion of attacin E.

It is found in the secreted. In terms of biological role, hemolymph antibacterial protein. In Hyalophora cecropia (Cecropia moth), this protein is Attacin-E.